The chain runs to 160 residues: SsrA-binding protein (160 aa).

The protein belongs to the SmpB family.

It is found in the cytoplasm. Functionally, required for rescue of stalled ribosomes mediated by trans-translation. Binds to transfer-messenger RNA (tmRNA), required for stable association of tmRNA with ribosomes. tmRNA and SmpB together mimic tRNA shape, replacing the anticodon stem-loop with SmpB. tmRNA is encoded by the ssrA gene; the 2 termini fold to resemble tRNA(Ala) and it encodes a 'tag peptide', a short internal open reading frame. During trans-translation Ala-aminoacylated tmRNA acts like a tRNA, entering the A-site of stalled ribosomes, displacing the stalled mRNA. The ribosome then switches to translate the ORF on the tmRNA; the nascent peptide is terminated with the 'tag peptide' encoded by the tmRNA and targeted for degradation. The ribosome is freed to recommence translation, which seems to be the essential function of trans-translation. The polypeptide is SsrA-binding protein (Mycobacterium leprae (strain Br4923)).